Reading from the N-terminus, the 1247-residue chain is Lon protease homolog 2, peroxisomal (1247 aa).

The region spanning Leu22 to Ile402 is the Lon N-terminal domain. Disordered regions lie at residues Ser76 to His103, Thr447 to Asp503, and Asp626 to Ser655. Low complexity predominate over residues Pro459–Gly477. Over residues Asp626–Lys639 the composition is skewed to basic and acidic residues. Gly721 to Thr728 is an ATP binding site. Residues Thr989–Glu1230 form the Lon proteolytic domain. Residues Ser1099 and Lys1142 contribute to the active site.

The protein belongs to the peptidase S16 family.

It is found in the peroxisome matrix. The enzyme catalyses Hydrolysis of proteins in presence of ATP.. Functionally, ATP-dependent serine protease that mediates the selective degradation of misfolded and unassembled polypeptides in the peroxisomal matrix. Necessary for type 2 peroxisome targeting signal (PTS2)-containing protein processing and facilitates peroxisome matrix protein import. In Candida dubliniensis (strain CD36 / ATCC MYA-646 / CBS 7987 / NCPF 3949 / NRRL Y-17841) (Yeast), this protein is Lon protease homolog 2, peroxisomal.